We begin with the raw amino-acid sequence, 253 residues long: Regulatory protein VirG (253 aa).

One can recognise a Response regulatory domain in the interval 15–129; the sequence is HVLVIDDDVA…EFLARIRVAL (115 aa). At Asp64 the chain carries 4-aspartylphosphate. The ompR/PhoB-type DNA-binding region spans 141–241; it reads RRSFSFADWT…ARGAGYFFDA (101 aa).

In terms of processing, phosphorylated by wide host range (WHR) VirA protein.

The protein resides in the cytoplasm. Its function is as follows. VirG is required for the positive regulation of at least two vir loci encoded by the Ti plasmid of A.tumefaciens. This Agrobacterium fabrum (strain C58 / ATCC 33970) (Agrobacterium tumefaciens (strain C58)) protein is Regulatory protein VirG (virG).